Here is a 217-residue protein sequence, read N- to C-terminus: Chaperone protein TorD (217 aa).

The protein belongs to the TorD/DmsD family. TorD subfamily.

Its subcellular location is the cytoplasm. Involved in the biogenesis of TorA. Acts on TorA before the insertion of the molybdenum cofactor and, as a result, probably favors a conformation of the apoenzyme that is competent for acquiring the cofactor. This chain is Chaperone protein TorD, found in Shewanella oneidensis (strain ATCC 700550 / JCM 31522 / CIP 106686 / LMG 19005 / NCIMB 14063 / MR-1).